The primary structure comprises 356 residues: Glycerol-3-phosphate dehydrogenase [NAD(P)+] (356 aa).

The NADPH site is built by tryptophan 12, arginine 32, arginine 33, and lysine 117. Sn-glycerol 3-phosphate is bound by residues lysine 117, glycine 151, and serine 153. Alanine 155 contacts NADPH. Residues lysine 206, aspartate 265, arginine 276, and asparagine 277 each coordinate sn-glycerol 3-phosphate. Lysine 206 functions as the Proton acceptor in the catalytic mechanism. Arginine 276 serves as a coordination point for NADPH. The NADPH site is built by leucine 309 and glutamate 311.

Belongs to the NAD-dependent glycerol-3-phosphate dehydrogenase family.

It localises to the cytoplasm. The enzyme catalyses sn-glycerol 3-phosphate + NAD(+) = dihydroxyacetone phosphate + NADH + H(+). The catalysed reaction is sn-glycerol 3-phosphate + NADP(+) = dihydroxyacetone phosphate + NADPH + H(+). Its pathway is membrane lipid metabolism; glycerophospholipid metabolism. Its function is as follows. Catalyzes the reduction of the glycolytic intermediate dihydroxyacetone phosphate (DHAP) to sn-glycerol 3-phosphate (G3P), the key precursor for phospholipid synthesis. The polypeptide is Glycerol-3-phosphate dehydrogenase [NAD(P)+] (Treponema pallidum (strain Nichols)).